Consider the following 86-residue polypeptide: Photosystem I reaction center subunit PsaK (86 aa).

A helical membrane pass occupies residues 15 to 34 (PWSTQVAMVMITCNLLAIVA).

The protein belongs to the PsaG/PsaK family.

It localises to the plastid. It is found in the chloroplast thylakoid membrane. The sequence is that of Photosystem I reaction center subunit PsaK from Pyropia yezoensis (Susabi-nori).